A 252-amino-acid chain; its full sequence is 2-succinyl-6-hydroxy-2,4-cyclohexadiene-1-carboxylate synthase (252 aa).

It belongs to the AB hydrolase superfamily. MenH family. In terms of assembly, monomer.

It carries out the reaction 5-enolpyruvoyl-6-hydroxy-2-succinyl-cyclohex-3-ene-1-carboxylate = (1R,6R)-6-hydroxy-2-succinyl-cyclohexa-2,4-diene-1-carboxylate + pyruvate. It participates in quinol/quinone metabolism; 1,4-dihydroxy-2-naphthoate biosynthesis; 1,4-dihydroxy-2-naphthoate from chorismate: step 3/7. The protein operates within quinol/quinone metabolism; menaquinone biosynthesis. In terms of biological role, catalyzes a proton abstraction reaction that results in 2,5-elimination of pyruvate from 2-succinyl-5-enolpyruvyl-6-hydroxy-3-cyclohexene-1-carboxylate (SEPHCHC) and the formation of 2-succinyl-6-hydroxy-2,4-cyclohexadiene-1-carboxylate (SHCHC). This is 2-succinyl-6-hydroxy-2,4-cyclohexadiene-1-carboxylate synthase from Salmonella arizonae (strain ATCC BAA-731 / CDC346-86 / RSK2980).